The sequence spans 412 residues: Tyrosine--tRNA ligase (412 aa).

Tyr31 is an L-tyrosine binding site. Residues Pro36–His45 carry the 'HIGH' region motif. Residues Tyr162 and Gln166 each contribute to the L-tyrosine site. The 'KMSKS' region motif lies at Lys222–Thr226. Lys225 serves as a coordination point for ATP. Positions Lys345 to Leu411 constitute an S4 RNA-binding domain.

This sequence belongs to the class-I aminoacyl-tRNA synthetase family. TyrS type 1 subfamily. In terms of assembly, homodimer.

The protein resides in the cytoplasm. The catalysed reaction is tRNA(Tyr) + L-tyrosine + ATP = L-tyrosyl-tRNA(Tyr) + AMP + diphosphate + H(+). Functionally, catalyzes the attachment of tyrosine to tRNA(Tyr) in a two-step reaction: tyrosine is first activated by ATP to form Tyr-AMP and then transferred to the acceptor end of tRNA(Tyr). This is Tyrosine--tRNA ligase from Chlamydia trachomatis serovar A (strain ATCC VR-571B / DSM 19440 / HAR-13).